A 296-amino-acid polypeptide reads, in one-letter code: Pantothenate synthetase (296 aa).

ATP is bound at residue 30–37 (MGNLHEGH). Histidine 37 acts as the Proton donor in catalysis. Position 61 (glutamine 61) interacts with (R)-pantoate. Position 61 (glutamine 61) interacts with beta-alanine. 149 to 152 (GEKD) is an ATP binding site. Residue glutamine 155 participates in (R)-pantoate binding. ATP is bound by residues valine 178 and 186-189 (MSSR).

The protein belongs to the pantothenate synthetase family. As to quaternary structure, homodimer.

It is found in the cytoplasm. The enzyme catalyses (R)-pantoate + beta-alanine + ATP = (R)-pantothenate + AMP + diphosphate + H(+). It functions in the pathway cofactor biosynthesis; (R)-pantothenate biosynthesis; (R)-pantothenate from (R)-pantoate and beta-alanine: step 1/1. In terms of biological role, catalyzes the condensation of pantoate with beta-alanine in an ATP-dependent reaction via a pantoyl-adenylate intermediate. The chain is Pantothenate synthetase from Vibrio atlanticus (strain LGP32) (Vibrio splendidus (strain Mel32)).